The sequence spans 1090 residues: UPF0507 protein EC1118_1M3_1541g (1090 aa).

Residues 289-436 (FSVNQLLTDF…FEDFNKNTGN (148 aa)) enclose the VPS9 domain.

It belongs to the UPF0507 family.

This is UPF0507 protein EC1118_1M3_1541g from Saccharomyces cerevisiae (strain Lalvin EC1118 / Prise de mousse) (Baker's yeast).